A 179-amino-acid polypeptide reads, in one-letter code: Large ribosomal subunit protein uL5 (179 aa).

Belongs to the universal ribosomal protein uL5 family. As to quaternary structure, part of the 50S ribosomal subunit; part of the 5S rRNA/L5/L18/L25 subcomplex. Contacts the 5S rRNA and the P site tRNA. Forms a bridge to the 30S subunit in the 70S ribosome.

In terms of biological role, this is one of the proteins that bind and probably mediate the attachment of the 5S RNA into the large ribosomal subunit, where it forms part of the central protuberance. In the 70S ribosome it contacts protein S13 of the 30S subunit (bridge B1b), connecting the 2 subunits; this bridge is implicated in subunit movement. Contacts the P site tRNA; the 5S rRNA and some of its associated proteins might help stabilize positioning of ribosome-bound tRNAs. This is Large ribosomal subunit protein uL5 from Rickettsia africae (strain ESF-5).